We begin with the raw amino-acid sequence, 115 residues long: MNIINKIEQEQLKADVTPFNVGDTIKVHTRVIEGGKERIQIFQGIVIAKRGSGINEAFTVRKISYGEGVERVFPLHTPRIAKIEVVNRGKVRRAKLHYLRGRIGKDAMIVKSANR.

This sequence belongs to the bacterial ribosomal protein bL19 family.

In terms of biological role, this protein is located at the 30S-50S ribosomal subunit interface and may play a role in the structure and function of the aminoacyl-tRNA binding site. This Akkermansia muciniphila (strain ATCC BAA-835 / DSM 22959 / JCM 33894 / BCRC 81048 / CCUG 64013 / CIP 107961 / Muc) protein is Large ribosomal subunit protein bL19.